The chain runs to 363 residues: Chorismate synthase (363 aa).

NADP(+) contacts are provided by Arg-48 and Arg-54. Residues 125-127, 238-239, Gly-278, 293-297, and Arg-319 each bind FMN; these read RSS, NA, and KPTSS.

This sequence belongs to the chorismate synthase family. As to quaternary structure, homotetramer. It depends on FMNH2 as a cofactor.

The enzyme catalyses 5-O-(1-carboxyvinyl)-3-phosphoshikimate = chorismate + phosphate. It participates in metabolic intermediate biosynthesis; chorismate biosynthesis; chorismate from D-erythrose 4-phosphate and phosphoenolpyruvate: step 7/7. Functionally, catalyzes the anti-1,4-elimination of the C-3 phosphate and the C-6 proR hydrogen from 5-enolpyruvylshikimate-3-phosphate (EPSP) to yield chorismate, which is the branch point compound that serves as the starting substrate for the three terminal pathways of aromatic amino acid biosynthesis. This reaction introduces a second double bond into the aromatic ring system. In Alcanivorax borkumensis (strain ATCC 700651 / DSM 11573 / NCIMB 13689 / SK2), this protein is Chorismate synthase.